Reading from the N-terminus, the 937-residue chain is Outer membrane usher protein CS3-2 (937 aa).

This sequence belongs to the fimbrial export usher family. Post-translationally, a 97 kDa form of the protein is thought to be due to post-translational processing of isoform 104 kDa.

It localises to the cell outer membrane. Its function is as follows. These proteins are essential for the biogenesis of mature CS3 pili, but not for synthesis of the CS3 pilin subunit. The protein is Outer membrane usher protein CS3-2 of Escherichia coli.